Consider the following 317-residue polypeptide: Transaldolase (317 aa).

Catalysis depends on Lys126, which acts as the Schiff-base intermediate with substrate.

The protein belongs to the transaldolase family. Type 1 subfamily. As to quaternary structure, homodimer.

It localises to the cytoplasm. The catalysed reaction is D-sedoheptulose 7-phosphate + D-glyceraldehyde 3-phosphate = D-erythrose 4-phosphate + beta-D-fructose 6-phosphate. It functions in the pathway carbohydrate degradation; pentose phosphate pathway; D-glyceraldehyde 3-phosphate and beta-D-fructose 6-phosphate from D-ribose 5-phosphate and D-xylulose 5-phosphate (non-oxidative stage): step 2/3. Transaldolase is important for the balance of metabolites in the pentose-phosphate pathway. The protein is Transaldolase of Burkholderia orbicola (strain MC0-3).